The chain runs to 334 residues: Glycerol-3-phosphate dehydrogenase [NAD(P)+] (334 aa).

The NADPH site is built by Trp-14, Arg-34, and Lys-107. Sn-glycerol 3-phosphate is bound by residues Lys-107 and Gly-135. Ala-139 serves as a coordination point for NADPH. 5 residues coordinate sn-glycerol 3-phosphate: Lys-190, Asp-243, Ser-253, Arg-254, and Asn-255. Residue Lys-190 is the Proton acceptor of the active site. Arg-254 is an NADPH binding site. NADPH contacts are provided by Val-272 and Glu-273.

It belongs to the NAD-dependent glycerol-3-phosphate dehydrogenase family.

It is found in the cytoplasm. It catalyses the reaction sn-glycerol 3-phosphate + NAD(+) = dihydroxyacetone phosphate + NADH + H(+). The enzyme catalyses sn-glycerol 3-phosphate + NADP(+) = dihydroxyacetone phosphate + NADPH + H(+). It participates in membrane lipid metabolism; glycerophospholipid metabolism. In terms of biological role, catalyzes the reduction of the glycolytic intermediate dihydroxyacetone phosphate (DHAP) to sn-glycerol 3-phosphate (G3P), the key precursor for phospholipid synthesis. The protein is Glycerol-3-phosphate dehydrogenase [NAD(P)+] of Neorickettsia sennetsu (strain ATCC VR-367 / Miyayama) (Ehrlichia sennetsu).